Consider the following 246-residue polypeptide: Bis(5'-nucleosyl)-tetraphosphatase PrpE [asymmetrical] (246 aa).

It belongs to the PrpE family. Ni(2+) serves as cofactor.

The enzyme catalyses P(1),P(4)-bis(5'-guanosyl) tetraphosphate + H2O = GMP + GTP + 2 H(+). Functionally, asymmetrically hydrolyzes Ap4p to yield AMP and ATP. The chain is Bis(5'-nucleosyl)-tetraphosphatase PrpE [asymmetrical] from Bacillus anthracis (strain A0248).